Consider the following 180-residue polypeptide: Prothoracicotropic hormone (180 aa).

Positions 1 to 15 (MKLLILCVMVHGLLA) are cleaved as a signal peptide. A propeptide spanning residues 16-64 (EGPGQVLWKEQVVAPEFLLDDREDIASNRNAFFYEDKRSFRPEGLGEQV) is cleaved from the precursor. 2 disulfide bridges follow: Cys88/Cys123 and Cys111/Cys175.

Homodimer; disulfide-linked.

It is found in the secreted. Its function is as follows. PTTH is a brain secretory polypeptide of insects which stimulates the prothoracic glands to produce and release ecdysone, the steroid essential to insect development. This is Prothoracicotropic hormone from Camponotus floridanus (Florida carpenter ant).